The following is a 272-amino-acid chain: MTNVFTIDAFREEVKKKYAPVLIGLSDDVTVELKPLLKLGQKAREAVVEVFKEFADIPDLEEDDDDELVDEYSLQVCDIIAKAFRLIATKPKKLIAALDEEPDPRIRAELYAAVLNTWKRETQLGGSRALAELIDKFGGAILADLLQYYRVDLRDLFRDEDPLSPRFVLSLVLCLPKDGAFYAERRGGQQYRGWTEDRYALADIYDAIQAGNHILLLANRDPKKPKPKAPKSYPRPDDLEKTTPKPGSFAAMVVRAKKAARERREREEESAE.

The segment at 219–272 (NRDPKKPKPKAPKSYPRPDDLEKTTPKPGSFAAMVVRAKKAARERREREEESAE) is disordered. 2 stretches are compositionally biased toward basic and acidic residues: residues 234–243 (PRPDDLEKTT) and 262–272 (ERREREEESAE).

Belongs to the L5likevirus tail assembly protein family. In terms of assembly, interacts with tail assembly protein Gp24 and tape measure protein.

Its function is as follows. Promotes tail assembly by creating a scaffold for the tail tube proteins. The tail assembly proteins Gp24 and Gp25 would wrap the linear tape measure protein to create a tail assembly scaffold. It would allow polymerization of tail tube protein during which Gp24 and Gp25 are released and therefore are absent from the mature virion. The tail assembly protein Gp25 is produced by a rare -1 ribosomal frameshift. The ratio Gp24/Gp25 is important for proper tail assembly. This chain is Tail assembly protein Gp25 (25), found in Mycobacterium phage L5 (Mycobacteriophage L5).